The primary structure comprises 193 residues: MTDEEEAEKHYHSGLPGILGTIDTLISKLEAIILALGVLLMATNTVANVIGRFALGESLFFTGEVNRILIIMITFAGIGYAARHGRHIRMSAIYDALPVGGRRALMIVISLFTSLVMFFLMYYSVHYVLDLYDKGRILPALGFPIFIIYVWVPLGFLITGIQYLFTAIKNLTSRDVYLSTSVVDGYKDTETEV.

The next 4 membrane-spanning stretches (helical) occupy residues 33 to 55 (ILAL…RFAL), 65 to 82 (VNRI…GYAA), 103 to 125 (RALM…YYSV), and 145 to 167 (IFII…LFTA).

This sequence belongs to the TRAP transporter small permease family. As to quaternary structure, the complex comprises the extracytoplasmic solute receptor protein TeaA, and the two transmembrane proteins TeaB and TeaC.

Its subcellular location is the cell inner membrane. Functionally, part of the tripartite ATP-independent periplasmic (TRAP) transport system TeaABC involved in the uptake of ectoine and hydroxyectoine in response to osmotic upshock. Probably functions as a recovery system for synthesized ectoine that leaks out of the cell. This is Ectoine TRAP transporter small permease protein TeaB (teaB) from Halomonas elongata (strain ATCC 33173 / DSM 2581 / NBRC 15536 / NCIMB 2198 / 1H9).